The chain runs to 325 residues: Aldo-keto reductase family 1 member A1 (325 aa).

Residue alanine 2 is modified to N-acetylalanine. Serine 4 is modified (phosphoserine). NADP(+) contacts are provided by residues 11-20 (GQKMPLIGLG), threonine 21, tryptophan 22, and aspartate 45. The Proton donor role is filled by tyrosine 50. Lysine 127 is modified (N6-acetyllysine; alternate). Lysine 127 bears the N6-succinyllysine; alternate mark. N6-succinyllysine is present on lysine 145. NADP(+) contacts are provided by serine 162, asparagine 163, serine 211, leucine 213, serine 215, serine 216, lysine 263, serine 264, valine 265, threonine 266, arginine 269, glutamine 272, and asparagine 273. At serine 211 the chain carries Phosphoserine.

Belongs to the aldo/keto reductase family. In terms of assembly, monomer.

It localises to the cytoplasm. It is found in the cytosol. The protein resides in the apical cell membrane. The enzyme catalyses a primary alcohol + NADP(+) = an aldehyde + NADPH + H(+). It catalyses the reaction glycerol + NADP(+) = D-glyceraldehyde + NADPH + H(+). The catalysed reaction is glycerol + NADP(+) = L-glyceraldehyde + NADPH + H(+). It carries out the reaction L-gulonate + NADP(+) = aldehydo-D-glucuronate + NADPH + H(+). The enzyme catalyses L-gulono-1,4-lactone + NADP(+) = D-glucurono-3,6-lactone + NADPH + H(+). It catalyses the reaction allyl alcohol + NADP(+) = acrolein + NADPH + H(+). The catalysed reaction is hydroxyacetone + NADP(+) = methylglyoxal + NADPH + H(+). It carries out the reaction 3-deoxyfructose + NADP(+) = 3-deoxyglucosone + NADPH + H(+). The enzyme catalyses (R)-mevalonate + NADP(+) = (R)-mevaldate + NADPH + H(+). It catalyses the reaction pyridine 3-methanol + NADP(+) = pyridine-3-carbaldehyde + NADPH + H(+). The catalysed reaction is S-nitroso-CoA + NADPH + H(+) = sulfinamide-CoA + NADP(+). It carries out the reaction S-nitrosoglutathione + NADPH + H(+) = S-(hydroxysulfenamide)glutathione + NADP(+). Catalyzes the NADPH-dependent reduction of a wide variety of carbonyl-containing compounds to their corresponding alcohols. Displays enzymatic activity towards endogenous metabolites such as aromatic and aliphatic aldehydes, ketones, monosaccharides and bile acids, with a preference for negatively charged substrates, such as glucuronate and succinic semialdehyde. Plays an important role in ascorbic acid biosynthesis by catalyzing the reduction of D-glucuronic acid and D-glucurono-gamma-lactone. Functions as a detoxifiying enzyme by reducing a range of toxic aldehydes. Reduces methylglyoxal and 3-deoxyglucosone, which are present at elevated levels under hyperglycemic conditions and are cytotoxic. Involved also in the detoxification of lipid-derived aldehydes like acrolein. Plays a role in the activation of procarcinogens, such as polycyclic aromatic hydrocarbon trans-dihydrodiols, and in the metabolism of various xenobiotics and drugs. Also acts as an inhibitor of protein S-nitrosylation by mediating degradation of S-nitroso-coenzyme A (S-nitroso-CoA), a cofactor required to S-nitrosylate proteins. S-nitroso-CoA reductase activity is involved in reprogramming intermediary metabolism in renal proximal tubules, notably by inhibiting protein S-nitrosylation of isoform 2 of PKM (PKM2). Also acts as a S-nitroso-glutathione reductase by catalyzing the NADPH-dependent reduction of S-nitrosoglutathione. Displays no reductase activity towards retinoids. This chain is Aldo-keto reductase family 1 member A1 (AKR1A1), found in Sus scrofa (Pig).